Reading from the N-terminus, the 525-residue chain is Peptide chain release factor 3 (525 aa).

A tr-type G domain is found at 11–279 (NKRRTFAIIS…TYLQFAPAPS (269 aa)). Residues 20 to 27 (SHPDAGKT), 88 to 92 (DTPGH), and 142 to 145 (NKFD) each bind GTP.

It belongs to the TRAFAC class translation factor GTPase superfamily. Classic translation factor GTPase family. PrfC subfamily.

The protein resides in the cytoplasm. Its function is as follows. Increases the formation of ribosomal termination complexes and stimulates activities of RF-1 and RF-2. It binds guanine nucleotides and has strong preference for UGA stop codons. It may interact directly with the ribosome. The stimulation of RF-1 and RF-2 is significantly reduced by GTP and GDP, but not by GMP. This is Peptide chain release factor 3 from Limosilactobacillus reuteri (strain DSM 20016) (Lactobacillus reuteri).